Consider the following 389-residue polypeptide: MSLLGARSTYRWFSIAASIPTKNAIGKSTYLLASRNQQYRGIITSTVDWKPIKTGKSPNDDSRRERSFGKKIVLGLMFAMPIISFYLGTWQVRRLKWKTKLIAACETKLTYEPIPLPKSFTPDMCEDWEYRKVILTGHFLHNEEMFVGPRKKNGEKGYFLFTPFIRDDTGEKVLIERGWISEEKVAPDSRNLHHLSLPQEEHLKVVCLVRPPKKRGSLQWAKKDPNSRLWQVPDIYDMARSSGCTPIQFQALYDMKDHPIIEEHTRNEASQNNSTSSLWKFWKREPTTAVNGTQAVDNNTSKPRSRQEMPTDQTIEFDERQFIKAGVPIGRKPTIDLKNNHLQYLVTWYGLSFLSTIFLIVALRKAKRGGVVSQDQLMKEKLKHSRKYM.

Residues 1-71 lie on the Mitochondrial matrix side of the membrane; it reads MSLLGARSTY…SRRERSFGKK (71 aa). A helical membrane pass occupies residues 72 to 92; the sequence is IVLGLMFAMPIISFYLGTWQV. Over 93–341 the chain is Mitochondrial intermembrane; it reads RRLKWKTKLI…KPTIDLKNNH (249 aa). The segment at 292 to 311 is disordered; it reads GTQAVDNNTSKPRSRQEMPT. The helical transmembrane segment at 342-362 threads the bilayer; it reads LQYLVTWYGLSFLSTIFLIVA. Residues 363–389 lie on the Mitochondrial matrix side of the membrane; that stretch reads LRKAKRGGVVSQDQLMKEKLKHSRKYM.

The protein belongs to the SURF1 family. As to quaternary structure, interacts with COA1, COX14 and MSS51.

It is found in the mitochondrion inner membrane. Required for efficient assembly of cytochrome c oxidase in the mitochondrial inner membrane. Involved in a step that couples MSS51-COX14-dependent regulation of COX1 translation to early steps of cytochrome c oxidase assembly. In Saccharomyces cerevisiae (strain ATCC 204508 / S288c) (Baker's yeast), this protein is Cytochrome oxidase assembly protein SHY1 (SHY1).